The sequence spans 382 residues: Anhydro-N-acetylmuramic acid kinase (382 aa).

Position 9–16 (9–16 (GTSLDGID)) interacts with ATP.

Belongs to the anhydro-N-acetylmuramic acid kinase family.

The catalysed reaction is 1,6-anhydro-N-acetyl-beta-muramate + ATP + H2O = N-acetyl-D-muramate 6-phosphate + ADP + H(+). It participates in amino-sugar metabolism; 1,6-anhydro-N-acetylmuramate degradation. Its pathway is cell wall biogenesis; peptidoglycan recycling. Its function is as follows. Catalyzes the specific phosphorylation of 1,6-anhydro-N-acetylmuramic acid (anhMurNAc) with the simultaneous cleavage of the 1,6-anhydro ring, generating MurNAc-6-P. Is required for the utilization of anhMurNAc either imported from the medium or derived from its own cell wall murein, and thus plays a role in cell wall recycling. This chain is Anhydro-N-acetylmuramic acid kinase, found in Bacillus thuringiensis subsp. konkukian (strain 97-27).